A 789-amino-acid polypeptide reads, in one-letter code: Alpha-glucosidase 2 (789 aa).

2 disordered regions span residues 1-24 (MTGLSPSGDIKPLLDDESQRPRVI) and 512-531 (ELNPQSLSSGLDDYPRASHP). The Proton donor role is filled by aspartate 523. The active-site Proton acceptor is the glutamate 756.

It belongs to the glycosyl hydrolase 63 family.

The protein operates within glycan metabolism; N-glycan degradation. The sequence is that of Alpha-glucosidase 2 (GCS2) from Arabidopsis thaliana (Mouse-ear cress).